A 416-amino-acid chain; its full sequence is MKIYLVGGAVRDSLLNLPIKDKDFMVVGATPEQMLQLGYRQVGKDFPVFLHPKTQQEYALARTERKVGLGYGGFSCYASPEVTLEQDLLRRDLTINAIAQDEAGNLHDPFHGIADIEARQLRHVSAAFSEDPLRVLRVARFAARFHGLGFEIAPETMALMQHMSQTEELTALTPERVWQEVDKSLGGPHPEVFFEVLRQCGALKVLFPEIDALFGVPQPEKWHPEIDTGLHTMMVLAQSSSMTEEKAVRFAALVHDLGKALSPKEHWPKHHGHGQKGLPVIKSLCERLRVPNEYRDLALLVSDQHQNVHQAFELRSETIIKLFDKADFWRKPERLKQLLLACIADMRGRTGFEHQPYPQSDYLNACFLAANNVDVKAIIAAGFQGAQIKEVVNSKRIEMVAQVKQHWPGAQAKETP.

Residues Gly8 and Arg11 each coordinate ATP. The CTP site is built by Gly8 and Arg11. Positions 21 and 23 each coordinate Mg(2+). ATP is bound by residues Arg91, Arg137, and Arg140. 3 residues coordinate CTP: Arg91, Arg137, and Arg140. The HD domain maps to 228–329; it reads TGLHTMMVLA…IKLFDKADFW (102 aa).

Belongs to the tRNA nucleotidyltransferase/poly(A) polymerase family. Bacterial CCA-adding enzyme type 1 subfamily. In terms of assembly, monomer. Can also form homodimers and oligomers. It depends on Mg(2+) as a cofactor. The cofactor is Ni(2+).

It carries out the reaction a tRNA precursor + 2 CTP + ATP = a tRNA with a 3' CCA end + 3 diphosphate. It catalyses the reaction a tRNA with a 3' CCA end + 2 CTP + ATP = a tRNA with a 3' CCACCA end + 3 diphosphate. Catalyzes the addition and repair of the essential 3'-terminal CCA sequence in tRNAs without using a nucleic acid template. Adds these three nucleotides in the order of C, C, and A to the tRNA nucleotide-73, using CTP and ATP as substrates and producing inorganic pyrophosphate. tRNA 3'-terminal CCA addition is required both for tRNA processing and repair. Also involved in tRNA surveillance by mediating tandem CCA addition to generate a CCACCA at the 3' terminus of unstable tRNAs. While stable tRNAs receive only 3'-terminal CCA, unstable tRNAs are marked with CCACCA and rapidly degraded. This chain is Multifunctional CCA protein, found in Shewanella sp. (strain MR-4).